Here is a 122-residue protein sequence, read N- to C-terminus: Photosystem II extrinsic protein U (122 aa).

The signal sequence occupies residues 1–30 (MRWLLSILVRVVLVLCLCFAPLGIPVVARA).

It belongs to the PsbU family. PSII is composed of 1 copy each of membrane proteins PsbA, PsbB, PsbC, PsbD, PsbE, PsbF, PsbH, PsbI, PsbJ, PsbK, PsbL, PsbM, PsbT, PsbX, PsbY, PsbZ, Psb30/Ycf12, peripheral proteins PsbO, CyanoQ (PsbQ), PsbU, PsbV and a large number of cofactors. It forms dimeric complexes.

It is found in the cellular thylakoid membrane. In terms of biological role, one of the extrinsic, lumenal subunits of photosystem II (PSII). PSII is a light-driven water plastoquinone oxidoreductase, using light energy to abstract electrons from H(2)O, generating a proton gradient subsequently used for ATP formation. The extrinsic proteins stabilize the structure of photosystem II oxygen-evolving complex (OEC), the ion environment of oxygen evolution and protect the OEC against heat-induced inactivation. This Synechococcus sp. (strain JA-2-3B'a(2-13)) (Cyanobacteria bacterium Yellowstone B-Prime) protein is Photosystem II extrinsic protein U.